A 467-amino-acid polypeptide reads, in one-letter code: Glutamyl-tRNA(Gln) amidotransferase subunit A (467 aa).

Catalysis depends on charge relay system residues Lys-57 and Ser-132. Residue Ser-156 is the Acyl-ester intermediate of the active site.

Belongs to the amidase family. GatA subfamily. Heterotrimer of A, B and C subunits.

It catalyses the reaction L-glutamyl-tRNA(Gln) + L-glutamine + ATP + H2O = L-glutaminyl-tRNA(Gln) + L-glutamate + ADP + phosphate + H(+). In terms of biological role, allows the formation of correctly charged Gln-tRNA(Gln) through the transamidation of misacylated Glu-tRNA(Gln) in organisms which lack glutaminyl-tRNA synthetase. The reaction takes place in the presence of glutamine and ATP through an activated gamma-phospho-Glu-tRNA(Gln). This Pseudothermotoga lettingae (strain ATCC BAA-301 / DSM 14385 / NBRC 107922 / TMO) (Thermotoga lettingae) protein is Glutamyl-tRNA(Gln) amidotransferase subunit A.